The sequence spans 349 residues: [LysW]-L-2-aminoadipate/[LysW]-L-glutamate phosphate reductase (349 aa).

Residue 10–13 (SGYT) participates in NADP(+) binding. Residue cysteine 150 is part of the active site. An NADP(+)-binding site is contributed by asparagine 316.

The protein belongs to the NAGSA dehydrogenase family. Type 1 subfamily. LysY sub-subfamily.

It localises to the cytoplasm. The catalysed reaction is [amino-group carrier protein]-C-terminal-N-(1-carboxy-5-oxopentan-1-yl)-L-glutamine + phosphate + NADP(+) = [amino-group carrier protein]-C-terminal-N-(1-carboxy-5-phosphooxy-5-oxopentan-1-yl)-L-glutamine + NADPH + H(+). It carries out the reaction [amino-group carrier protein]-C-terminal-gamma-(L-glutamyl-5-semialdehyde)-L-glutamate + phosphate + NADP(+) = [amino-group carrier protein]-C-terminal-gamma-(5-phospho-L-glutamyl)-L-glutamate + NADPH + H(+). Its pathway is amino-acid biosynthesis; L-lysine biosynthesis via AAA pathway; L-lysine from L-alpha-aminoadipate (Thermus route): step 3/5. The protein operates within amino-acid biosynthesis; L-arginine biosynthesis. In terms of biological role, involved in both the arginine and lysine biosynthetic pathways. The chain is [LysW]-L-2-aminoadipate/[LysW]-L-glutamate phosphate reductase from Sulfurisphaera tokodaii (strain DSM 16993 / JCM 10545 / NBRC 100140 / 7) (Sulfolobus tokodaii).